Reading from the N-terminus, the 582-residue chain is DNA repair and recombination protein radC (582 aa).

Residues 146 to 150 mediate DNA binding; the sequence is KRALR. Residues 194–204 show a composition bias toward basic and acidic residues; it reads KKEPMRVKPSL. 3 disordered regions span residues 194–226, 310–400, and 485–582; these read KKEP…NSAA, QIPN…INGQ, and APSG…QHQH. A compositionally biased stretch (polar residues) spans 326-335; the sequence is QNQYTNQRQS. Residues 516 to 529 show a composition bias toward low complexity; that stretch reads AAAQNNTAAANRMA.

It belongs to the RAD52 family. As to quaternary structure, part of a complex that includes RAD51, RAD52 and RAD59.

It localises to the nucleus. Functionally, involved in DNA double-strand break (DSB) repair and recombination. Promotes the annealing of complementary single-stranded DNA and by stimulation of the RAD51 recombinase. The chain is DNA repair and recombination protein radC (radC) from Emericella nidulans (strain FGSC A4 / ATCC 38163 / CBS 112.46 / NRRL 194 / M139) (Aspergillus nidulans).